We begin with the raw amino-acid sequence, 372 residues long: tRNA-specific 2-thiouridylase MnmA (372 aa).

Residues 17 to 24 (GMSGGVDS) and M43 each bind ATP. An interaction with target base in tRNA region spans residues 103 to 105 (NPD). C108 serves as the catalytic Nucleophile. C108 and C205 are oxidised to a cystine. G133 provides a ligand contact to ATP. The segment at 155–157 (KDQ) is interaction with tRNA. C205 serves as the catalytic Cysteine persulfide intermediate. Residues 317 to 318 (RY) are interaction with tRNA.

The protein belongs to the MnmA/TRMU family.

The protein localises to the cytoplasm. It catalyses the reaction S-sulfanyl-L-cysteinyl-[protein] + uridine(34) in tRNA + AH2 + ATP = 2-thiouridine(34) in tRNA + L-cysteinyl-[protein] + A + AMP + diphosphate + H(+). In terms of biological role, catalyzes the 2-thiolation of uridine at the wobble position (U34) of tRNA, leading to the formation of s(2)U34. This is tRNA-specific 2-thiouridylase MnmA from Shewanella sediminis (strain HAW-EB3).